A 452-amino-acid chain; its full sequence is Cholesterol 7-desaturase nvd 2 (452 aa).

2 consecutive transmembrane segments (helical) span residues 6 to 26 and 32 to 52; these read LIRITVMVITSERLLILMGLC and FPVMIRVVFNAAVAIVIALVM. One can recognise a Rieske domain in the interval 107–212; the sequence is WFKVADSTWI…CCEVDGMAYL (106 aa). 4 residues coordinate [2Fe-2S] cluster: cysteine 148, histidine 150, cysteine 169, and histidine 172.

The protein belongs to the cholesterol 7-desaturase family. Requires [2Fe-2S] cluster as cofactor.

It localises to the membrane. It catalyses the reaction cholesterol + NADPH + O2 + H(+) = 7-dehydrocholesterol + NADP(+) + 2 H2O. It carries out the reaction cholesterol + NADH + O2 + H(+) = 7-dehydrocholesterol + NAD(+) + 2 H2O. It functions in the pathway steroid hormone biosynthesis; dafachronic acid biosynthesis. In terms of biological role, catalyzes the production of 7-dehydrocholesterol (7-DHC or cholesta-5,7-dien-3beta-ol) by inserting a double bond (desaturating) at the C7-C8 single bond of cholesterol. Essential regulator of steroid biosynthesis as this reaction is the first step in the synthesis of the steroid hormone Delta(7)-dafachronic acid. The polypeptide is Cholesterol 7-desaturase nvd 2 (Ciona intestinalis (Transparent sea squirt)).